A 356-amino-acid polypeptide reads, in one-letter code: Tyrosine recombinase XerS (356 aa).

The region spanning 16–121 is the Core-binding (CB) domain; it reads IMPWYVLEYY…ALSSLFKYLT (106 aa). Residues 169-354 form the Tyr recombinase domain; that stretch reads EFLEYIDCEY…VNDEQKNALD (186 aa). Residues Arg210, Lys234, His306, Arg309, and His332 contribute to the active site. Tyr341 functions as the O-(3'-phospho-DNA)-tyrosine intermediate in the catalytic mechanism.

The protein belongs to the 'phage' integrase family. XerS subfamily.

The protein resides in the cytoplasm. Its activity is regulated as follows. FtsK is required for recombination. Its function is as follows. Site-specific tyrosine recombinase, which acts by catalyzing the cutting and rejoining of the recombining DNA molecules. Essential to convert dimers of the bacterial chromosome into monomers to permit their segregation at cell division. The polypeptide is Tyrosine recombinase XerS (Streptococcus agalactiae serotype Ia (strain ATCC 27591 / A909 / CDC SS700)).